The sequence spans 751 residues: FAD-dependent monooxygenase atnA (751 aa).

The helical transmembrane segment at 8–28 (LIVGGGVAGLSLAIMLEAYGF) threads the bilayer. Glutamate 34, glycine 48, and arginine 109 together coordinate FAD. The active site involves tyrosine 218. Residues aspartate 311 and alanine 324 each coordinate FAD. The next 8 membrane-spanning stretches (helical) occupy residues 446–466 (PLATISWIVFLTLAACFPWSV), 481–501 (SEVFQLYTSVMAVSISGLWVI), 508–528 (LLISPMFSSLPWILASNYWGW), 563–583 (ALLPCLAMAYSIPGILTALAS), 590–610 (DWWPVAHCTFPVLVYVSSTFL), 639–659 (IAVVSSAVHVTLIWNHGAALL), 663–683 (IISLLSVPLARTLASLTALIV), and 706–726 (AWAVILVSTVLLGPAASLAGA).

This sequence belongs to the paxM FAD-dependent monooxygenase family. FAD serves as cofactor.

The protein localises to the membrane. It functions in the pathway secondary metabolite biosynthesis; terpenoid biosynthesis. Its function is as follows. FAD-dependent monooxygenase; part of the gene cluster that mediates the biosynthesis of the meroterpenoids arthripenoids. The pathway begins with the HR-PKS atnH that catalyzes two chain-extension steps to form a reduced triketide, which then primes the SAT domain in the NR-PKS atnG to initiate three more cycles of extension to give a linear hexaketide corresponding to the polyketide part of arthripenoids. The FAD-dependent monooxygenase atnJ then performs an oxidative decarboxylation at C11 of the atnH/atnG product, via an electrophilic aromatic hydroxylation with concomitant ipso-decarboxylation. The membrane-bound polyprenyl transferase atnF then introduces a farnesyl group before the FAD-dependent monooxygenase atnK functions as the first epoxidase on terminal C12'-C13' olefin, followed by a second epoxidation on C7'-C8' catalyzed by atnA. The terpene cyclase/mutase atnI then initiates the sequential tricyclic ring formation through protonation of the terminal epoxide and catalyzes the regioselective and stereoselective 6/6/6-tricyclic ring formation. The cytochrome P450 monooxygenase atnM is responsible for hydroxylating both C1' and C10'. The next steps may involve ketoreduction and acetyl transfer by the ketoreductase atnB and the acetyltransferase atnC, and lead to the production of arthripenoid B, the final biosynthetic product of the atn cluster. The hydroquinone moiety in arthripenoid B is prone to undergo spontaneous oxidation to afford a benzoquinone compound, a key intermediate for generating structure diversity. For instance, addition of a cysteine followed by ring contraction gives arthripenoid A, tautomerization gives the main product arthripenoid C, addition of a molecular of water or amine affords arthripenoid D or E, respectively, and loss of one water forms arthripenoid F. The chain is FAD-dependent monooxygenase atnA from Arthrinium sp.